Consider the following 1089-residue polypeptide: PALM2-AKAP2 fusion protein (1089 aa).

Residues 70 to 107 are a coiled coil; that stretch reads SEEDEFKVKQLEDNIQRLEQEIQALESEESQISAKEQI. 3 disordered regions span residues 165–194, 210–231, and 289–362; these read SEDANQLRSKQDNCGDSRLEPAASSLSPDH, PGVTSTPHSKDHSSPFYSPSHN, and PAHS…SRDG. Positions 173-183 are enriched in basic and acidic residues; it reads SKQDNCGDSRL. Phosphoserine occurs at positions 315 and 318. Over residues 317-328 the composition is skewed to basic and acidic residues; that stretch reads PSDRMAEGERAN. A compositionally biased stretch (polar residues) spans 329–347; it reads GHSTDQPQDLLGNSLQAPA. Serine 348 bears the Phosphoserine mark. The segment covering 348 to 357 has biased composition (low complexity); that stretch reads SPSSSTSSHC. Lysine 370 participates in a covalent cross-link: Glycyl lysine isopeptide (Lys-Gly) (interchain with G-Cter in SUMO1); alternate. A Glycyl lysine isopeptide (Lys-Gly) (interchain with G-Cter in SUMO2); alternate cross-link involves residue lysine 370. A disordered region spans residues 429–517; sequence KNPGIAAKWW…LSTSQPCTAP (89 aa). Positions 455–470 are enriched in basic and acidic residues; it reads LESHRKYKERKEKRAQ. A compositionally biased stretch (low complexity) spans 471–508; that stretch reads QEQLQLQQQQQQQLQQQQLQQQQLQQQQLQQQLQQQQL. Serine 553 is modified (phosphoserine). The tract at residues 592 to 644 is disordered; it reads TVGGTLEDGGTQAAKEQKAPCVSESQSAGAGPANAATQGKEGPYSEPSKRGPL. Serine 678, serine 682, and serine 734 each carry phosphoserine. Residues 712–749 are compositionally biased toward polar residues; the sequence is FSMDNISDSGASNETPSALQENSLADFSLPQTPQTDNP. Disordered stretches follow at residues 712–783, 800–899, and 915–934; these read FSMD…DPLE, EQVD…YFSK, and TQESDVMVGPFKLRSRKQRT. The residue at position 743 (threonine 743) is a Phosphothreonine. Residues 782 to 795 are PKA-RII subunit binding domain; sequence LEYQAGLLVQNAIQ. Over residues 801–814 the composition is skewed to basic and acidic residues; sequence QVDKAEAHTSKEGS. Serine 847 is modified (phosphoserine). A compositionally biased stretch (basic and acidic residues) spans 850-871; sequence QEKRDILPKNLPAEDRALREKG. Residues 928 to 958 are a coiled coil; that stretch reads RSRKQRTLSMIEEEIRAAQEREEELKRQRQV. Serine 936, serine 964, serine 995, and serine 1002 each carry phosphoserine. Residues 946 to 1021 form a disordered region; sequence QEREEELKRQ…AAGTQRPKNL (76 aa).

Highly expressed in lung and weakly in thymus and cerebellum. Little or no expression in liver, heart and cerebral cortex. All isoforms are expressed in lung, but KL2A and KL2B isoforms are the principal isoforms in cerebellum.

The protein resides in the apical cell membrane. Its function is as follows. Binds to regulatory subunit (RII) of protein kinase A. May be involved in establishing polarity in signaling systems or in integrating PKA-RII isoforms with downstream effectors to capture, amplify and focus diffuse, trans-cellular signals carried by cAMP. Binds tp and modulates the structure of the actin cytoskeleton. This Mus musculus (Mouse) protein is PALM2-AKAP2 fusion protein.